The sequence spans 324 residues: Acetyl-coenzyme A carboxylase carboxyl transferase subunit alpha (324 aa).

A CoA carboxyltransferase C-terminal domain is found at 44-298; the sequence is RFQDKLTKLQ…RKELIKQLNI (255 aa).

Belongs to the AccA family. As to quaternary structure, acetyl-CoA carboxylase is a heterohexamer composed of biotin carboxyl carrier protein (accB), biotin carboxylase (accC) and two subunits each of ACCase subunit alpha (accA) and ACCase subunit beta (accD).

It localises to the plastid. The protein resides in the chloroplast. The enzyme catalyses N(6)-carboxybiotinyl-L-lysyl-[protein] + acetyl-CoA = N(6)-biotinyl-L-lysyl-[protein] + malonyl-CoA. It participates in lipid metabolism; malonyl-CoA biosynthesis; malonyl-CoA from acetyl-CoA: step 1/1. Component of the acetyl coenzyme A carboxylase (ACC) complex. First, biotin carboxylase catalyzes the carboxylation of biotin on its carrier protein (BCCP) and then the CO(2) group is transferred by the carboxyltransferase to acetyl-CoA to form malonyl-CoA. The protein is Acetyl-coenzyme A carboxylase carboxyl transferase subunit alpha of Porphyra purpurea (Red seaweed).